A 630-amino-acid chain; its full sequence is Chaperone protein HtpG (630 aa).

Positions 1 to 341 (MTQNATSETL…SADLPLNVSR (341 aa)) are a; substrate-binding. Residues 342–558 (EILQESRDVR…QNDLSPHLLR (217 aa)) are b. Positions 559–630 (MLKAAGQEVP…KRLNALLLKV (72 aa)) are c.

This sequence belongs to the heat shock protein 90 family. In terms of assembly, homodimer.

It localises to the cytoplasm. Functionally, molecular chaperone. Has ATPase activity. The chain is Chaperone protein HtpG from Bordetella avium (strain 197N).